The following is an 803-amino-acid chain: Phenylalanine--tRNA ligase beta subunit (803 aa).

In terms of domain architecture, tRNA-binding spans 39–150; that stretch reads AKVLAPFTIA…ADAPVGAAYA (112 aa). Residues 400-475 form the B5 domain; it reads ADDKIIDFPL…RIVGVDKVPL (76 aa). Mg(2+) contacts are provided by aspartate 453, aspartate 459, glutamate 462, and glutamate 463. Residues 709-802 form the FDX-ACB domain; that stretch reads SAFHPVSRDF…VTKKTGGSLR (94 aa).

The protein belongs to the phenylalanyl-tRNA synthetase beta subunit family. Type 1 subfamily. In terms of assembly, tetramer of two alpha and two beta subunits. It depends on Mg(2+) as a cofactor.

The protein localises to the cytoplasm. The enzyme catalyses tRNA(Phe) + L-phenylalanine + ATP = L-phenylalanyl-tRNA(Phe) + AMP + diphosphate + H(+). The polypeptide is Phenylalanine--tRNA ligase beta subunit (Rhodopseudomonas palustris (strain ATCC BAA-98 / CGA009)).